The primary structure comprises 40 residues: Protein P4 (40 aa).

A helical membrane pass occupies residues 10–29; the sequence is KYFAYGVAISAAGAILAEYV.

Its subcellular location is the virion membrane. May interact with the viral DNA. This is Protein P4 (IV) from Pseudoalteromonas phage PM2 (Bacteriophage PM2).